The sequence spans 179 residues: Natural killer cells antigen CD94 (179 aa).

Topologically, residues 1-10 (MAVSRITRWR) are cytoplasmic. Residues 11-31 (LMSVIFGIKCLFLMVTLGVLL) traverse the membrane as a helical; Signal-anchor for type II membrane protein segment. Residues 32-179 (INSFTIQNIQ…NRYICKKLPI (148 aa)) lie on the Extracellular side of the membrane. Disulfide bonds link Cys58–Cys70, Cys61–Cys72, Cys89–Cys174, and Cys152–Cys166. In terms of domain architecture, C-type lectin spans 68-175 (HQCNCYFISK…CENKNRYICK (108 aa)). N-linked (GlcNAc...) asparagine glycosylation is found at Asn93 and Asn109.

In terms of assembly, can form disulfide-bonded heterodimer with NKG2 family members KLRC1 and KLRC2. KLRD1-KLRC1 heterodimer interacts with peptide-bound MHC-E-B2M heterotrimeric complex. KLRD1 plays a prominent role in directly interacting with MHC-E. KLRD1-KLRC1 interacts with much higher affinity with peptide-bound MHC-E-B2M than KLRD1-KLRC2. Interacts with the adapter protein TYROBP/DAP12; this interaction is required for cell surface expression and cell activation.

The protein localises to the cell membrane. Immune receptor involved in self-nonself discrimination. In complex with KLRC1 or KLRC2 on cytotoxic and regulatory lymphocyte subsets, recognizes non-classical major histocompatibility (MHC) class Ib molecule MHC-E loaded with self-peptides derived from the signal sequence of classical MHC class Ia and non-classical MHC class Ib molecules. Enables cytotoxic cells to monitor the expression of MHC class I molecules in healthy cells and to tolerate self. Primarily functions as a ligand binding subunit as it lacks the capacity to signal. Its function is as follows. KLRD1-KLRC1 acts as an immune inhibitory receptor. Key inhibitory receptor on natural killer (NK) cells that regulates their activation and effector functions. Dominantly counteracts T cell receptor signaling on a subset of memory/effector CD8-positive T cells as part of an antigen-driven response to avoid autoimmunity. On intraepithelial CD8-positive gamma-delta regulatory T cells triggers TGFB1 secretion, which in turn limits the cytotoxic programming of intraepithelial CD8-positive alpha-beta T cells, distinguishing harmless from pathogenic antigens. In MHC-E-rich tumor microenvironment, acts as an immune inhibitory checkpoint and may contribute to progressive loss of effector functions of NK cells and tumor-specific T cells, a state known as cell exhaustion. Upon MHC-E-peptide binding, transmits intracellular signals through KLRC1 immunoreceptor tyrosine-based inhibition motifs (ITIMs) by recruiting INPP5D/SHIP-1 and INPPL1/SHIP-2 tyrosine phosphatases to ITIMs, and ultimately opposing signals transmitted by activating receptors through dephosphorylation of proximal signaling molecules. Functionally, KLRD1-KLRC2 acts as an immune activating receptor. On cytotoxic lymphocyte subsets recognizes MHC-E loaded with signal sequence-derived peptides from non-classical MHC class Ib MHC-G molecules, likely playing a role in the generation and effector functions of adaptive NK cells and in maternal-fetal tolerance during pregnancy. Regulates the effector functions of terminally differentiated cytotoxic lymphocyte subsets, and in particular may play a role in adaptive NK cell response to viral infection. Upon MHC-E-peptide binding, transmits intracellular signals via the adapter protein TYROBP/DAP12, triggering the phosphorylation of proximal signaling molecules and cell activation. This is Natural killer cells antigen CD94 (Klrd1) from Mus musculus (Mouse).